Reading from the N-terminus, the 684-residue chain is Methionine--tRNA ligase (684 aa).

The 'HIGH' region signature appears at Pro12–His22. Zn(2+) contacts are provided by Cys143, Cys146, Cys156, and Cys159. Positions Lys339–Ser343 match the 'KMSKS' region motif. Lys342 lines the ATP pocket. In terms of domain architecture, tRNA-binding spans Asp581–Gly684.

This sequence belongs to the class-I aminoacyl-tRNA synthetase family. MetG type 1 subfamily. As to quaternary structure, homodimer. Zn(2+) serves as cofactor.

Its subcellular location is the cytoplasm. It carries out the reaction tRNA(Met) + L-methionine + ATP = L-methionyl-tRNA(Met) + AMP + diphosphate. In terms of biological role, is required not only for elongation of protein synthesis but also for the initiation of all mRNA translation through initiator tRNA(fMet) aminoacylation. The sequence is that of Methionine--tRNA ligase from Neisseria gonorrhoeae (strain ATCC 700825 / FA 1090).